Reading from the N-terminus, the 488-residue chain is Zinc metalloproteinase-disintegrin VMP-II (488 aa).

Positions methionine 1–serine 20 are cleaved as a signal peptide. Positions isoleucine 21–glutamate 191 are excised as a propeptide. One can recognise a Peptidase M12B domain in the interval arginine 198–proline 396. 2 residues coordinate Ca(2+): glutamate 201 and aspartate 285. Asparagine 296 carries N-linked (GlcNAc...) asparagine glycosylation. Cystine bridges form between cysteine 309/cysteine 391, cysteine 349/cysteine 373, and cysteine 351/cysteine 356. Histidine 334 is a Zn(2+) binding site. Glutamate 335 is a catalytic residue. The Zn(2+) site is built by histidine 338 and histidine 344. Ca(2+)-binding residues include cysteine 391, asparagine 394, asparagine 409, glutamate 413, glutamate 416, and aspartate 419. A Disintegrin domain is found at proline 404–glycine 488. 7 disulfides stabilise this stretch: cysteine 407–cysteine 426, cysteine 418–cysteine 436, cysteine 420–cysteine 431, cysteine 430–cysteine 453, cysteine 444–cysteine 450, cysteine 449–cysteine 474, and cysteine 462–cysteine 481. Residues arginine 466–aspartate 468 carry the Cell attachment site motif.

This sequence belongs to the venom metalloproteinase (M12B) family. P-II subfamily. P-IIb sub-subfamily. Homodimer; disulfide-linked (disintegrin). Zn(2+) is required as a cofactor. Expressed by the venom gland.

The protein localises to the secreted. Zinc metalloproteinase-disintegrin VMP-II: inhibits ADP-induced platelet aggregation (probably by binding integrin alpha-IIb/beta-3 (ITGA2B/ITGB3)) and degrades fibrinogen. In terms of biological role, recombinant disintegrin r-Cam-dis (413-488): this recombinant protein inhibits platelet adhesion to fibrinogen (IC(50) is 1 nM), inhibits collagen- (IC(50) is 18 nM) and ADP-induced (IC(50) is 6 nM) platelet aggregation, and also inhibits platelet function on clot retraction. May act by binding integrin alpha-IIb/beta-3 (ITGA2B/ITGB3). The sequence is that of Zinc metalloproteinase-disintegrin VMP-II from Crotalus adamanteus (Eastern diamondback rattlesnake).